A 1158-amino-acid polypeptide reads, in one-letter code: ATP-dependent helicase/deoxyribonuclease subunit B (1158 aa).

8-15 (GRAGTGKS) contributes to the ATP binding site. [4Fe-4S] cluster is bound by residues Cys791, Cys1112, Cys1115, and Cys1121.

The protein belongs to the helicase family. AddB/RexB type 1 subfamily. As to quaternary structure, heterodimer of AddA and AddB. The cofactor is Mg(2+). It depends on [4Fe-4S] cluster as a cofactor.

In terms of biological role, the heterodimer acts as both an ATP-dependent DNA helicase and an ATP-dependent, dual-direction single-stranded exonuclease. Recognizes the chi site generating a DNA molecule suitable for the initiation of homologous recombination. The AddB subunit has 5' -&gt; 3' nuclease activity but not helicase activity. The sequence is that of ATP-dependent helicase/deoxyribonuclease subunit B from Clostridium perfringens (strain ATCC 13124 / DSM 756 / JCM 1290 / NCIMB 6125 / NCTC 8237 / Type A).